Here is a 1176-residue protein sequence, read N- to C-terminus: MDNNPNINECIPYNCLSNPEVEVLGGERIETGYTPIDISLSLTQFLLSEFVPGAGFVLGLVDIIWGIFGPSQWDAFLVQIEQLINQRIEEFARNQAISRLEGLSNLYQIYAESFREWEADPTNPALREEMRIQFNDMNSALTTAIPLFAVQNYQVPLLSVYVQAANLHLSVLRDVSVFGQRWGFDAATINSRYNDLTRLIGNYTDYAVRWYNTGLERVWGPDSRDWVRYNQFRRELTLTVLDIVALFSNYDSRRYPIRTVSQLTREIYTNPVLENFDGSFRGMAQRIEQNIRQPHLMDILNSITIYTDVHRGFNYWSGHQITASPVGFSGPEFAFPLFGNAGNAAPPVLVSLTGLGIFRTLSSPLYRRIILGSGPNNQELFVLDGTEFSFASLTTNLPSTIYRQRGTVDSLDVIPPQDNSVPPRAGFSHRLSHVTMLSQAAGAVYTLRAPTFSWQHRSAEFNNIIPSSQITQIPLTKSTNLGSGTSVVKGPGFTGGDILRRTSPGQISTLRVNITAPLSQRYRVRIRYASTTNLQFHTSIDGRPINQGNFSATMSSGSNLQSGSFRTVGFTTPFNFSNGSSVFTLSAHVFNSGNEVYIDRIEFVPAEVTFEAEYDLERAQKAVNELFTSSNQIGLKTDVTDYHIDQVSNLVECLSDEFCLDEKQELSEKVKHAKRLSDERNLLQDPNFRGINRQLDRGWRGSTDITIQGGDDVFKENYVTLLGTFDECYPTYLYQKIDESKLKAYTRYQLRGYIEDSQDLEIYLIRYNAKHETVNVPGTGSLWPLSAQSPIGKCGEPNRCAPHLEWNPDLDCSCRDGEKCAHHSHHFSLDIDVGCTDLNEDLGVWVIFKIKTQDGHARLGNLEFLEEKPLVGEALARVKRAEKKWRDKREKLEWETNIVYKEAKESVDALFVNSQYDQLQADTNIAMIHAADKRVHSIREAYLPELSVIPGVNAAIFEELEGRIFTAFSLYDARNVIKNGDFNNGLSCWNVKGHVDVEEQNNQRSVLVVPEWEAEVSQEVRVCPGRGYILRVTAYKEGYGEGCVTIHEIENNTDELKFSNCVEEEIYPNNTVTCNDYTVNQEEYGGAYTSRNRGYNEAPSVPADYASVYEEKSYTDGRRENPCEFNRGYRDYTPLPVGYVTKELEYFPETDKVWIEIGETEGTFIVDSVELLLMEE.

This sequence belongs to the delta endotoxin family.

Functionally, promotes colloidosmotic lysis by binding to the midgut epithelial cells of many lepidopteran larvae. The polypeptide is Pesticidal crystal protein Cry1Aa (cry1Aa) (Bacillus thuringiensis subsp. aizawai).